Here is a 245-residue protein sequence, read N- to C-terminus: 1-(5-phosphoribosyl)-5-[(5-phosphoribosylamino)methylideneamino] imidazole-4-carboxamide isomerase (245 aa).

D7 acts as the Proton acceptor in catalysis. Residue D129 is the Proton donor of the active site.

Belongs to the HisA/HisF family.

Its subcellular location is the cytoplasm. The catalysed reaction is 1-(5-phospho-beta-D-ribosyl)-5-[(5-phospho-beta-D-ribosylamino)methylideneamino]imidazole-4-carboxamide = 5-[(5-phospho-1-deoxy-D-ribulos-1-ylimino)methylamino]-1-(5-phospho-beta-D-ribosyl)imidazole-4-carboxamide. Its pathway is amino-acid biosynthesis; L-histidine biosynthesis; L-histidine from 5-phospho-alpha-D-ribose 1-diphosphate: step 4/9. This Shewanella pealeana (strain ATCC 700345 / ANG-SQ1) protein is 1-(5-phosphoribosyl)-5-[(5-phosphoribosylamino)methylideneamino] imidazole-4-carboxamide isomerase.